A 182-amino-acid polypeptide reads, in one-letter code: Thymidine kinase (182 aa).

8–15 (GPMFSGKT) serves as a coordination point for ATP. Glu85 serves as the catalytic Proton acceptor. Phe117 is a substrate binding site. Residues Cys142 and Cys145 each contribute to the Zn(2+) site. 161 to 165 (IIEIG) is a substrate binding site. Residues Cys174 and Cys177 each coordinate Zn(2+).

This sequence belongs to the thymidine kinase family.

It carries out the reaction thymidine + ATP = dTMP + ADP + H(+). The protein is Thymidine kinase (TK) of Amsacta moorei entomopoxvirus (AmEPV).